The following is a 532-amino-acid chain: Cytochrome c oxidase subunit 1 (532 aa).

3 helical membrane-spanning segments follow: residues 1–21, 27–47, and 69–89; these read MWDYVKLVALGVVAAIAAYAA, LPYMVNMVEVALAAVIALIWV, and GVIATTFWGIVGFLVAVVIAF. H114 contributes to the heme b binding site. 8 helical membrane-spanning segments follow: residues 115–135, 143–163, 185–205, 212–232, 263–283, 296–316, 328–348, and 366–386; these read TSAVIFAFGGNALIASAFYVV, LFGGTALGWFVFWGWQLIIVT, LDILVAVVWVAYLIAFLGTIF, IYVANWFYLSFIVTIAMLHIV, GHNAVGFFLTAGFLGMMYYFV, LSIVHFWALIFLYIWAGPHHL, LGMVMSVILWMPSWGGMINGL, and MMVVSIGFYGMSTFEGPMMSI. Cu cation is bound by residues H264, H314, and H315. 2 residues coordinate heme b: H402 and H404. 3 consecutive transmembrane segments (helical) span residues 403 to 423, 442 to 462, and 496 to 516; these read VHSGALGWNGMITFGMLYFLT, FWLATIGIVLYASAMWVTGIM, and VGGVLYLLGGLIMAYNLWATV.

It belongs to the heme-copper respiratory oxidase family. Cu(2+) is required as a cofactor. It depends on heme b as a cofactor.

It is found in the cell membrane. It catalyses the reaction 4 Fe(II)-[cytochrome c] + O2 + 8 H(+)(in) = 4 Fe(III)-[cytochrome c] + 2 H2O + 4 H(+)(out). Its pathway is energy metabolism; oxidative phosphorylation. Cytochrome c oxidase is the component of the respiratory chain that catalyzes the reduction of oxygen to water. Subunits 1-3 form the functional core of the enzyme complex. Co I is the catalytic subunit of the enzyme. Electrons originating in cytochrome c are transferred via the copper A center of subunit 2 and heme a of subunit 1 to the bimetallic center formed by heme a3 and copper B. This cytochrome c oxidase shows proton pump activity across the membrane in addition to the electron transfer. This Rhodobacter capsulatus (Rhodopseudomonas capsulata) protein is Cytochrome c oxidase subunit 1 (ctaD).